A 214-amino-acid chain; its full sequence is Methyltransferase HEMK2 (214 aa).

Residues T29, E51, G53, D77, D103, L104, and N122 each coordinate S-adenosyl-L-homocysteine. S-adenosyl-L-methionine-binding residues include T29, E51, G53, D77, D103, L104, and N122. N122 is an a protein binding site.

It belongs to the eukaryotic/archaeal PrmC-related family. In terms of assembly, heterodimer; heterodimerization with TRMT112 is required for S-adenosyl-L-methionine-binding. As to quaternary structure, does not interact with TRMT112. Ubiquitinated, leading to its degradation by the proteasome. Widely expressed, with highest expression in parathyroid and pituitary glands, followed by adrenal gland and kidney, and lowest expression in leukocytes and mammary gland.

It is found in the nucleus. The catalysed reaction is L-lysyl-[histone] + S-adenosyl-L-methionine = N(6)-methyl-L-lysyl-[histone] + S-adenosyl-L-homocysteine + H(+). It catalyses the reaction L-glutaminyl-[protein] + S-adenosyl-L-methionine = N(5)-methyl-L-glutaminyl-[protein] + S-adenosyl-L-homocysteine + H(+). It carries out the reaction methylarsonous acid + S-adenosyl-L-methionine = dimethylarsinate + S-adenosyl-L-homocysteine + 2 H(+). In terms of biological role, methyltransferase that can methylate proteins and, to a lower extent, arsenic. Catalytic subunit of a heterodimer with TRMT112, which monomethylates 'Lys-12' of histone H4 (H4K12me1), a modification present at the promoters of numerous genes encoding cell cycle regulators. Catalytic subunit of a heterodimer with TRMT112, which catalyzes N5-methylation of Glu residue of proteins with a Gly-Gln-Xaa-Xaa-Xaa-Arg motif. Methylates ETF1 on 'Gln-185'; ETF1 needs to be complexed to ERF3 in its GTP-bound form to be efficiently methylated. May also play a role in the modulation of arsenic-induced toxicity by mediating the conversion of monomethylarsonous acid (3+) into the less toxic dimethylarsonic acid. It however only plays a limited role in arsenic metabolism compared with AS3MT. The polypeptide is Methyltransferase HEMK2 (Homo sapiens (Human)).